Consider the following 706-residue polypeptide: Translation initiation factor IF-2 (706 aa).

Positions 55-117 (KEVNSDSNQE…PTMKDEKGLI (63 aa)) are disordered. Basic and acidic residues predominate over residues 67-81 (VNTDDKLDKIDKPNK). A compositionally biased stretch (basic residues) spans 93-108 (KNKKSKKKQKNKKKGP). A tr-type G domain is found at 208–375 (SRPPVVTVMG…MILLVSEVEE (168 aa)). The interval 217-224 (GHVDHGKT) is G1. GTP is bound at residue 217–224 (GHVDHGKT). The interval 242–246 (GITQH) is G2. The G3 stretch occupies residues 263-266 (DTPG). Residues 263–267 (DTPGH) and 317–320 (NKID) contribute to the GTP site. The segment at 317-320 (NKID) is G4. A G5 region spans residues 353 to 355 (SAI).

It belongs to the TRAFAC class translation factor GTPase superfamily. Classic translation factor GTPase family. IF-2 subfamily.

The protein resides in the cytoplasm. In terms of biological role, one of the essential components for the initiation of protein synthesis. Protects formylmethionyl-tRNA from spontaneous hydrolysis and promotes its binding to the 30S ribosomal subunits. Also involved in the hydrolysis of GTP during the formation of the 70S ribosomal complex. The sequence is that of Translation initiation factor IF-2 from Alkaliphilus metalliredigens (strain QYMF).